The chain runs to 722 residues: Polyribonucleotide nucleotidyltransferase (722 aa).

Mg(2+)-binding residues include D495 and D501. In terms of domain architecture, KH spans 561 to 620; sequence PRLYVMKINPEKIREVIGKGGETIRSITKDTGCEINIEEDGTITIASVSSEGAEAAKKRI. In terms of domain architecture, S1 motif spans 630-700; it reads GKVYEGTVVK…DRGRIRLSIK (71 aa).

Belongs to the polyribonucleotide nucleotidyltransferase family. Requires Mg(2+) as cofactor.

It is found in the cytoplasm. It catalyses the reaction RNA(n+1) + phosphate = RNA(n) + a ribonucleoside 5'-diphosphate. Involved in mRNA degradation. Catalyzes the phosphorolysis of single-stranded polyribonucleotides processively in the 3'- to 5'-direction. The polypeptide is Polyribonucleotide nucleotidyltransferase (Chromobacterium violaceum (strain ATCC 12472 / DSM 30191 / JCM 1249 / CCUG 213 / NBRC 12614 / NCIMB 9131 / NCTC 9757 / MK)).